A 233-amino-acid chain; its full sequence is Histidinol dehydrogenase (233 aa).

The substrate site is built by Ser31, Gln53, and His56. Zn(2+) is bound by residues Gln53 and His56. Catalysis depends on proton acceptor residues Glu121 and His122. 4 residues coordinate substrate: His122, Asp155, Glu209, and His214. Residue Asp155 coordinates Zn(2+). His214 contacts Zn(2+).

The protein belongs to the histidinol dehydrogenase family. Requires Zn(2+) as cofactor.

The enzyme catalyses L-histidinol + 2 NAD(+) + H2O = L-histidine + 2 NADH + 3 H(+). It functions in the pathway amino-acid biosynthesis; L-histidine biosynthesis; L-histidine from 5-phospho-alpha-D-ribose 1-diphosphate: step 9/9. In terms of biological role, catalyzes the sequential NAD-dependent oxidations of L-histidinol to L-histidinaldehyde and then to L-histidine. In Thiocapsa roseopersicina, this protein is Histidinol dehydrogenase (hisD).